Consider the following 154-residue polypeptide: Endoribonuclease YbeY (154 aa).

The Zn(2+) site is built by His-114, His-118, and His-124.

Belongs to the endoribonuclease YbeY family. Zn(2+) serves as cofactor.

It is found in the cytoplasm. Functionally, single strand-specific metallo-endoribonuclease involved in late-stage 70S ribosome quality control and in maturation of the 3' terminus of the 16S rRNA. The sequence is that of Endoribonuclease YbeY from Haemophilus influenzae (strain 86-028NP).